The primary structure comprises 515 residues: ATP synthase subunit alpha (515 aa).

169–176 is a binding site for ATP; that stretch reads GDRQTGKT.

Belongs to the ATPase alpha/beta chains family. As to quaternary structure, F-type ATPases have 2 components, CF(1) - the catalytic core - and CF(0) - the membrane proton channel. CF(1) has five subunits: alpha(3), beta(3), gamma(1), delta(1), epsilon(1). CF(0) has three main subunits: a(1), b(2) and c(9-12). The alpha and beta chains form an alternating ring which encloses part of the gamma chain. CF(1) is attached to CF(0) by a central stalk formed by the gamma and epsilon chains, while a peripheral stalk is formed by the delta and b chains.

The protein localises to the cell inner membrane. The catalysed reaction is ATP + H2O + 4 H(+)(in) = ADP + phosphate + 5 H(+)(out). Its function is as follows. Produces ATP from ADP in the presence of a proton gradient across the membrane. The alpha chain is a regulatory subunit. In Neisseria meningitidis serogroup C / serotype 2a (strain ATCC 700532 / DSM 15464 / FAM18), this protein is ATP synthase subunit alpha.